A 199-amino-acid chain; its full sequence is Chaperone protein TorD (199 aa).

Belongs to the TorD/DmsD family. TorD subfamily.

It localises to the cytoplasm. Functionally, involved in the biogenesis of TorA. Acts on TorA before the insertion of the molybdenum cofactor and, as a result, probably favors a conformation of the apoenzyme that is competent for acquiring the cofactor. This is Chaperone protein TorD from Escherichia coli (strain ATCC 8739 / DSM 1576 / NBRC 3972 / NCIMB 8545 / WDCM 00012 / Crooks).